The chain runs to 396 residues: Elongation factor Tu 1 (396 aa).

A tr-type G domain is found at 10 to 206 (KPHVNVGTIG…QIDSYIPEPE (197 aa)). Positions 19–26 (GHIDHGKT) are G1. 19–26 (GHIDHGKT) provides a ligand contact to GTP. A Mg(2+)-binding site is contributed by T26. Residues 60 to 64 (GITIA) form a G2 region. The G3 stretch occupies residues 81 to 84 (DCPG). GTP-binding positions include 81 to 85 (DCPGH) and 136 to 139 (NKCD). The interval 136–139 (NKCD) is G4. The segment at 174–176 (SAL) is G5.

It belongs to the TRAFAC class translation factor GTPase superfamily. Classic translation factor GTPase family. EF-Tu/EF-1A subfamily. In terms of assembly, monomer.

The protein resides in the cytoplasm. It catalyses the reaction GTP + H2O = GDP + phosphate + H(+). GTP hydrolase that promotes the GTP-dependent binding of aminoacyl-tRNA to the A-site of ribosomes during protein biosynthesis. The chain is Elongation factor Tu 1 from Desulfotalea psychrophila (strain LSv54 / DSM 12343).